The following is a 372-amino-acid chain: Peptide chain release factor 2 (372 aa).

Gln-253 is subject to N5-methylglutamine.

This sequence belongs to the prokaryotic/mitochondrial release factor family. Methylated by PrmC. Methylation increases the termination efficiency of RF2.

The protein localises to the cytoplasm. Functionally, peptide chain release factor 2 directs the termination of translation in response to the peptide chain termination codons UGA and UAA. The chain is Peptide chain release factor 2 from Mycolicibacterium gilvum (strain PYR-GCK) (Mycobacterium gilvum (strain PYR-GCK)).